Here is a 497-residue protein sequence, read N- to C-terminus: Histone-lysine N-methyltransferase ASHR3 (497 aa).

The PHD-type zinc-finger motif lies at 118–186 (MVDCLVCHKP…QWRCVKCPMA (69 aa)). One can recognise an AWS domain in the interval 283–326 (DGVGCTNCGPNCDRSCVCRVQCISCSKGCSCPESCGNRPFRKEK). An SET domain is found at 326–443 (KKIKIVKTEH…AGEPLTYDYR (118 aa)). Positions 449 to 465 (PEVKCNCGSENCQGYLG) constitute a Post-SET domain.

This sequence belongs to the class V-like SAM-binding methyltransferase superfamily. Histone-lysine methyltransferase family. SET2 subfamily. Interacts with AMS/bHLH21 by its SET domain and PHD finger. As to expression, expressed in roots, flowers and buds, the anther and in stamen filaments.

It localises to the nucleus. The protein resides in the chromosome. The catalysed reaction is L-lysyl-[histone] + S-adenosyl-L-methionine = N(6)-methyl-L-lysyl-[histone] + S-adenosyl-L-homocysteine + H(+). In terms of biological role, histone methyltransferase. Involved in stamen development. This chain is Histone-lysine N-methyltransferase ASHR3 (ASHR3), found in Arabidopsis thaliana (Mouse-ear cress).